Consider the following 87-residue polypeptide: Large ribosomal subunit protein bL27 (87 aa).

Positions 1–21 (MAHKKAGGSSRNGRDSESKRL) are disordered.

Belongs to the bacterial ribosomal protein bL27 family.

The protein is Large ribosomal subunit protein bL27 of Paraburkholderia phytofirmans (strain DSM 17436 / LMG 22146 / PsJN) (Burkholderia phytofirmans).